Reading from the N-terminus, the 133-residue chain is Single-stranded DNA-binding protein 2 (133 aa).

The SSB domain occupies methionine 1–glutamate 103.

In terms of assembly, homotetramer.

The protein is Single-stranded DNA-binding protein 2 (ssb2) of Clostridium acetobutylicum (strain ATCC 824 / DSM 792 / JCM 1419 / IAM 19013 / LMG 5710 / NBRC 13948 / NRRL B-527 / VKM B-1787 / 2291 / W).